The sequence spans 308 residues: Aspartate carbamoyltransferase catalytic subunit (308 aa).

Residues Arg-55 and Thr-56 each contribute to the carbamoyl phosphate site. L-aspartate is bound at residue Lys-83. Positions 105, 133, and 136 each coordinate carbamoyl phosphate. Residues Arg-166 and Arg-223 each contribute to the L-aspartate site. Carbamoyl phosphate-binding residues include Gly-264 and Pro-265.

Belongs to the aspartate/ornithine carbamoyltransferase superfamily. ATCase family. In terms of assembly, heterododecamer (2C3:3R2) of six catalytic PyrB chains organized as two trimers (C3), and six regulatory PyrI chains organized as three dimers (R2).

The enzyme catalyses carbamoyl phosphate + L-aspartate = N-carbamoyl-L-aspartate + phosphate + H(+). It functions in the pathway pyrimidine metabolism; UMP biosynthesis via de novo pathway; (S)-dihydroorotate from bicarbonate: step 2/3. Its function is as follows. Catalyzes the condensation of carbamoyl phosphate and aspartate to form carbamoyl aspartate and inorganic phosphate, the committed step in the de novo pyrimidine nucleotide biosynthesis pathway. The chain is Aspartate carbamoyltransferase catalytic subunit from Salinispora tropica (strain ATCC BAA-916 / DSM 44818 / JCM 13857 / NBRC 105044 / CNB-440).